A 133-amino-acid polypeptide reads, in one-letter code: Ubiquitin-like FUBI-ribosomal protein eS30 fusion protein (133 aa).

A disordered region spans residues 84–110; it reads GKVRGQTPKVAKQEKKKKKTGRAKRRM. Residues 97-110 show a composition bias toward basic residues; sequence EKKKKKTGRAKRRM. An N6-succinyllysine modification is found at Lys-125.

This sequence in the N-terminal section; belongs to the ubiquitin family. It in the C-terminal section; belongs to the eukaryotic ribosomal protein eS30 family. In terms of assembly, component of the 40S subunit of the ribosome. In terms of processing, FUBI is cleaved from ribosomal protein S30 by the deubiquitinase USP36 before the assembly of ribosomal protein S30 into pre-40S ribosomal particles. FUBI removal from ribosomal protein S30 is a crucial event for the final maturation of pre-40S particles.

Its subcellular location is the nucleus. The protein resides in the cytoplasm. In terms of biological role, may have pro-apoptotic activity. Component of the 40S subunit of the ribosome. Contributes to the assembly and function of 40S ribosomal subunits. This is Ubiquitin-like FUBI-ribosomal protein eS30 fusion protein (Fau) from Mus musculus (Mouse).